The sequence spans 874 residues: Alanine--tRNA ligase (874 aa).

Positions 562, 566, 664, and 668 each coordinate Zn(2+).

The protein belongs to the class-II aminoacyl-tRNA synthetase family. The cofactor is Zn(2+).

It is found in the cytoplasm. It catalyses the reaction tRNA(Ala) + L-alanine + ATP = L-alanyl-tRNA(Ala) + AMP + diphosphate. Functionally, catalyzes the attachment of alanine to tRNA(Ala) in a two-step reaction: alanine is first activated by ATP to form Ala-AMP and then transferred to the acceptor end of tRNA(Ala). Also edits incorrectly charged Ser-tRNA(Ala) and Gly-tRNA(Ala) via its editing domain. The sequence is that of Alanine--tRNA ligase from Shewanella sediminis (strain HAW-EB3).